The sequence spans 24 residues: U4-ctenitoxin-Co1b (24 aa).

Post-translationally, disulfide bonds are present. Expressed by the venom gland.

Its subcellular location is the secreted. Its function is as follows. Omega-agatoxins are antagonists of voltage-gated calcium channels (Cav). The chain is U4-ctenitoxin-Co1b from Ctenus ornatus (Brazilian spider).